We begin with the raw amino-acid sequence, 83 residues long: ATP synthase subunit c, chloroplastic (83 aa).

2 consecutive transmembrane segments (helical) span residues 3–23 (PIISAASVIAAGLSVGLAAIG) and 57–77 (LAFMEALTIYGLVVALSLLFA).

Belongs to the ATPase C chain family. In terms of assembly, F-type ATPases have 2 components, F(1) - the catalytic core - and F(0) - the membrane proton channel. F(1) has five subunits: alpha(3), beta(3), gamma(1), delta(1), epsilon(1). F(0) has four main subunits: a(1), b(1), b'(1) and c(10-14). The alpha and beta chains form an alternating ring which encloses part of the gamma chain. F(1) is attached to F(0) by a central stalk formed by the gamma and epsilon chains, while a peripheral stalk is formed by the delta, b and b' chains.

The protein resides in the plastid. The protein localises to the chloroplast thylakoid membrane. Its function is as follows. F(1)F(0) ATP synthase produces ATP from ADP in the presence of a proton or sodium gradient. F-type ATPases consist of two structural domains, F(1) containing the extramembraneous catalytic core and F(0) containing the membrane proton channel, linked together by a central stalk and a peripheral stalk. During catalysis, ATP synthesis in the catalytic domain of F(1) is coupled via a rotary mechanism of the central stalk subunits to proton translocation. In terms of biological role, key component of the F(0) channel; it plays a direct role in translocation across the membrane. A homomeric c-ring of between 10-14 subunits forms the central stalk rotor element with the F(1) delta and epsilon subunits. This chain is ATP synthase subunit c, chloroplastic, found in Diacronema lutheri (Unicellular marine alga).